Consider the following 547-residue polypeptide: Glucose-6-phosphate isomerase (547 aa).

Residue Glu354 is the Proton donor of the active site. Residues His385 and Lys513 contribute to the active site.

Belongs to the GPI family.

It is found in the cytoplasm. The enzyme catalyses alpha-D-glucose 6-phosphate = beta-D-fructose 6-phosphate. The protein operates within carbohydrate biosynthesis; gluconeogenesis. Its pathway is carbohydrate degradation; glycolysis; D-glyceraldehyde 3-phosphate and glycerone phosphate from D-glucose: step 2/4. Catalyzes the reversible isomerization of glucose-6-phosphate to fructose-6-phosphate. In Endomicrobium trichonymphae, this protein is Glucose-6-phosphate isomerase.